A 421-amino-acid chain; its full sequence is Replication factor C large subunit (421 aa).

Residue 63 to 70 participates in ATP binding; the sequence is GPPGIGKT.

This sequence belongs to the activator 1 small subunits family. RfcL subfamily. In terms of assembly, heteromultimer composed of small subunits (RfcS) and large subunits (RfcL).

Its function is as follows. Part of the RFC clamp loader complex which loads the PCNA sliding clamp onto DNA. In Pyrobaculum calidifontis (strain DSM 21063 / JCM 11548 / VA1), this protein is Replication factor C large subunit.